A 513-amino-acid chain; its full sequence is Zinc finger protein RFP (513 aa).

The segment at 16 to 57 (CPVCLQYFAEPMMLDCGHNICCACLARCWGTAETNVSCPQCR) adopts an RING-type zinc-finger fold. Positions 96, 99, 118, and 124 each coordinate Zn(2+). The B box-type zinc-finger motif lies at 96–127 (CEKHREPLKLYCEEDQMPICVVCDRSREHRGH). 2 coiled-coil regions span residues 132-172 (LEEA…AELL) and 282-311 (QKCL…LREA). Positions 298-492 (MQSDMEKIQE…SAAPLIICPM (195 aa)) constitute a B30.2/SPRY domain.

The protein belongs to the TRIM/RBCC family. In terms of assembly, homomultimerizes. Part of a complex consisting of TRIM27, USP7 and MAGEL2; directly interacts with USP7. Interacts with PML, EIF3S6, EPC1, CHD4 and EID1. Interacts with MAGED4, MAGEF1 and MAGEL2. Interacts with PTPN11. Interacts with autophagy receptor p62/SQSTM1. As to quaternary structure, (Microbial infection) Interacts with M.tuberculosis PtpA, whick blocks TRIM27-promoted JNK/p38 MAPK pathway activation and cell apoptosis. (Microbial infection) Interacts with herpes simplex virus protein ICP0. In terms of tissue distribution, expressed in testis namely within the seminiferous tubules.

It localises to the nucleus. It is found in the cytoplasm. The protein localises to the PML body. The protein resides in the early endosome. Its subcellular location is the mitochondrion. The enzyme catalyses S-ubiquitinyl-[E2 ubiquitin-conjugating enzyme]-L-cysteine + [acceptor protein]-L-lysine = [E2 ubiquitin-conjugating enzyme]-L-cysteine + N(6)-ubiquitinyl-[acceptor protein]-L-lysine.. Its pathway is protein modification; protein ubiquitination. E3 ubiquitin-protein ligase that mediates ubiquitination of various substrates and thereby plays a role in diffent processes including proliferation, innate immunity, apoptosis, immune response or autophagy. Ubiquitinates PIK3C2B and inhibits its activity by mediating the formation of 'Lys-48'-linked polyubiquitin chains; the function inhibits CD4 T-cell activation. Acts as a regulator of retrograde transport: together with MAGEL2, mediates the formation of 'Lys-63'-linked polyubiquitin chains at 'Lys-220' of WASHC1, leading to promote endosomal F-actin assembly. Has a transcriptional repressor activity by cooperating with EPC1. Induces apoptosis by activating Jun N-terminal kinase and p38 kinase and also increases caspase-3-like activity independently of mitochondrial events. May function in male germ cell development. Has DNA-binding activity and preferentially bound to double-stranded DNA. Forms a complex with and ubiquitinates the ubiquitin-specific protease USP7, which in turn deubiquitinates RIPK1 resulting in the positive regulation of TNF-alpha-induced apoptosis. In addition, acts with USP7 or PTPN11 as an inhibitor of the antiviral signaling pathway by promoting kinase TBK1 ubiquitination and degradation. Acts as a negative regulator of NOD2 signaling by mediating ubiquitination of NOD2, promoting its degradation by the proteasome. Alternatively, facilitates mitophagy via stabilization of active TBK1. Negatively regulates autophagy flux under basal conditions by directly polyubiquitinating ULK1. During starvation-induced autophagy, catalyzes non-degradative ubiquitination of the kinase STK38L promoting its activation and phosphorylation of ULK1 leading to its ubiquitination and degradation to restrain the amplitude and duration of autophagy. Functionally, (Microbial infection) Positively regulates hepatitis C virus replication by suppressing type I IFN response during infection. In Homo sapiens (Human), this protein is Zinc finger protein RFP.